A 1132-amino-acid polypeptide reads, in one-letter code: SNF2 domain-containing protein CLASSY 4 (1132 aa).

Disordered regions lie at residues Asn24 to Phe104, Leu224 to Lys331, Asp376 to Arg396, and Pro525 to Arg544. The short motif at Lys47–Asp54 is the Nuclear localization signal element. Over residues Glu81–Glu90 the composition is skewed to basic and acidic residues. Residues Val92 to Ser103 are compositionally biased toward polar residues. Residues Ser233 to Ser242 are compositionally biased toward low complexity. Acidic residues predominate over residues Ser243–Gly254. Over residues Thr255–Gly269 the composition is skewed to basic and acidic residues. Acidic residues-rich tracts occupy residues Glu270 to Ser282 and Asp291 to Glu309. Basic and acidic residues-rich tracts occupy residues Gly310–Val326, Asp376–Lys392, and Pro525–Asp539. Residues Ser603–Ala796 form the Helicase ATP-binding domain. His616–Thr623 is a binding site for ATP. Residues Asp747–His750 carry the DEAH box motif. The Helicase C-terminal domain maps to Asp934–Lys1087.

It belongs to the SNF2/RAD54 helicase family. In terms of assembly, interacts with NRPD1.

It is found in the nucleus. Probable chromatin remodeling factor. This Arabidopsis thaliana (Mouse-ear cress) protein is SNF2 domain-containing protein CLASSY 4 (CLSY4).